Consider the following 142-residue polypeptide: Transcriptional regulator MraZ (142 aa).

2 consecutive SpoVT-AbrB domains span residues 5-51 (ASAL…PRPE) and 77-120 (AMDV…DSQT).

This sequence belongs to the MraZ family. In terms of assembly, forms oligomers.

The protein resides in the cytoplasm. Its subcellular location is the nucleoid. This Burkholderia ambifaria (strain MC40-6) protein is Transcriptional regulator MraZ.